The sequence spans 104 residues: Urease subunit beta (104 aa).

Belongs to the urease beta subunit family. Heterotrimer of UreA (gamma), UreB (beta) and UreC (alpha) subunits. Three heterotrimers associate to form the active enzyme.

Its subcellular location is the cytoplasm. It catalyses the reaction urea + 2 H2O + H(+) = hydrogencarbonate + 2 NH4(+). Its pathway is nitrogen metabolism; urea degradation; CO(2) and NH(3) from urea (urease route): step 1/1. The polypeptide is Urease subunit beta (Rhodococcus opacus (strain B4)).